The following is a 409-amino-acid chain: Nucleoprotein (409 aa).

Disordered regions lie at residues 1–32 (MASGKATGKTDAPAPVIKLGGPKPPKVGSSGN), 46–69 (SPPLKFEGSGVPDNENLKTSQQHG), 120–193 (GADT…SGAE), and 238–259 (VDQVFGPRTKGKEGNFGDDKMN). Low complexity predominate over residues 15–31 (PVIKLGGPKPPKVGSSG). The tract at residues 29-160 (SSGNASWFQA…GNFRWDFIPL (132 aa)) is RNA-binding. Residues 31-156 (GNASWFQAIK…GGPDGNFRWD (126 aa)) enclose the CoV N NTD domain. The span at 162–179 (RGRSGKSTAASSAASSRA) shows a compositional bias: low complexity. Composition is skewed to basic and acidic residues over residues 180–192 (PSREGSRGRRSGA) and 247–259 (KGKEGNFGDDKMN). Serine 190 carries the phosphoserine; by host modification. A CoV N CTD domain is found at 215–331 (TKAKADEMAH…QCVDGVGTRP (117 aa)). The tract at residues 226 to 333 (RYCKRTIPPG…VDGVGTRPKD (108 aa)) is dimerization. A disulfide bridge connects residues cysteine 320 and cysteine 323. Positions 327–409 (VGTRPKDDEP…GDSALGENEL (83 aa)) are disordered. Over residues 341–354 (RSSSRPATRTSSPA) the composition is skewed to low complexity. Residues 358–367 (PRPKKEKKTK) are compositionally biased toward basic residues. Residues 368–384 (KQDDEVDKALTSDEERN) show a composition bias toward basic and acidic residues. At threonine 378 the chain carries Phosphothreonine; by host. Residue serine 379 is modified to Phosphoserine; by host.

It belongs to the gammacoronavirus nucleocapsid protein family. As to quaternary structure, homooligomer. Both monomeric and oligomeric forms interact with RNA. Interacts with protein M. Interacts with NSP3; this interaction serves to tether the genome to the newly translated replicase-transcriptase complex at a very early stage of infection. In terms of processing, ADP-ribosylated. The ADP-ribosylation is retained in the virion during infection. Phosphorylated on serine and threonine residues.

Its subcellular location is the virion. It localises to the host endoplasmic reticulum-Golgi intermediate compartment. The protein localises to the host Golgi apparatus. In terms of biological role, packages the positive strand viral genome RNA into a helical ribonucleocapsid (RNP) and plays a fundamental role during virion assembly through its interactions with the viral genome and membrane protein M. Plays an important role in enhancing the efficiency of subgenomic viral RNA transcription as well as viral replication. This Gallus gallus (Chicken) protein is Nucleoprotein.